We begin with the raw amino-acid sequence, 204 residues long: Double homeobox protein A (204 aa).

Residues His15–Lys74 constitute a DNA-binding region (homeobox 1). Disordered regions lie at residues Gln73–Ala101 and Glu163–Trp204. A compositionally biased stretch (polar residues) spans Leu81–Asp90. A DNA-binding region (homeobox 2) is located at residues Ala101–Arg160. A compositionally biased stretch (polar residues) spans Glu184–His197.

It belongs to the paired homeobox family. Expressed in embryonic stem cells.

Its subcellular location is the nucleus. Its function is as follows. Transcription factor that acts as a repressor. The polypeptide is Double homeobox protein A (Homo sapiens (Human)).